A 484-amino-acid chain; its full sequence is 6-phosphogluconate dehydrogenase, decarboxylating (484 aa).

NADP(+) contacts are provided by residues 11 to 16 (GLAVMG), 34 to 36 (NRT), 76 to 78 (VRA), and asparagine 104. Substrate contacts are provided by residues asparagine 104 and 130–132 (SGG). Lysine 185 serves as the catalytic Proton acceptor. 188-189 (HN) contributes to the substrate binding site. Glutamate 192 (proton donor) is an active-site residue. Substrate-binding residues include tyrosine 193, lysine 262, arginine 289, arginine 447, and histidine 453.

It belongs to the 6-phosphogluconate dehydrogenase family. Homodimer.

The enzyme catalyses 6-phospho-D-gluconate + NADP(+) = D-ribulose 5-phosphate + CO2 + NADPH. Its pathway is carbohydrate degradation; pentose phosphate pathway; D-ribulose 5-phosphate from D-glucose 6-phosphate (oxidative stage): step 3/3. Catalyzes the oxidative decarboxylation of 6-phosphogluconate to ribulose 5-phosphate and CO(2), with concomitant reduction of NADP to NADPH. The sequence is that of 6-phosphogluconate dehydrogenase, decarboxylating (gnd) from Haemophilus ducreyi (strain 35000HP / ATCC 700724).